We begin with the raw amino-acid sequence, 450 residues long: C4-dicarboxylate transport protein (450 aa).

The next 8 membrane-spanning stretches (helical) occupy residues 25-45, 56-76, 90-110, 162-182, 200-220, 234-254, 319-339, and 367-387; these read VVFA…YGAA, LIKM…IASM, MAYF…VANV, ILQV…VGDA, LVNI…AFTI, LVLT…GAVA, IYMT…LTLG, and AATL…ILGV.

It belongs to the dicarboxylate/amino acid:cation symporter (DAACS) (TC 2.A.23) family.

Its subcellular location is the cell inner membrane. In terms of biological role, responsible for the transport of dicarboxylates such as succinate, fumarate, and malate from the periplasm across the membrane. The sequence is that of C4-dicarboxylate transport protein from Acidovorax sp. (strain JS42).